Consider the following 289-residue polypeptide: Digeranylgeranylglyceryl phosphate synthase (289 aa).

8 helical membrane-spanning segments follow: residues 18–38 (LMAG…LISG), 47–67 (AFPF…SGAG), 99–119 (FYFS…INSI), 120–140 (CGSI…TLKG), 163–183 (IFGF…ALAI), 218–238 (LAVL…FMSV), 243–263 (YIYL…QLLV), and 269–289 (KSSK…IAGV).

It belongs to the UbiA prenyltransferase family. DGGGP synthase subfamily. It depends on Mg(2+) as a cofactor.

It is found in the cell membrane. It carries out the reaction sn-3-O-(geranylgeranyl)glycerol 1-phosphate + (2E,6E,10E)-geranylgeranyl diphosphate = 2,3-bis-O-(geranylgeranyl)-sn-glycerol 1-phosphate + diphosphate. It functions in the pathway membrane lipid metabolism; glycerophospholipid metabolism. Functionally, prenyltransferase that catalyzes the transfer of the geranylgeranyl moiety of geranylgeranyl diphosphate (GGPP) to the C2 hydroxyl of (S)-3-O-geranylgeranylglyceryl phosphate (GGGP). This reaction is the second ether-bond-formation step in the biosynthesis of archaeal membrane lipids. The chain is Digeranylgeranylglyceryl phosphate synthase from Methanosarcina mazei (strain ATCC BAA-159 / DSM 3647 / Goe1 / Go1 / JCM 11833 / OCM 88) (Methanosarcina frisia).